We begin with the raw amino-acid sequence, 153 residues long: 6,7-dimethyl-8-ribityllumazine synthase (153 aa).

5-amino-6-(D-ribitylamino)uracil is bound by residues Phe-22, 56 to 58, and 80 to 82; these read AFE and TVI. 85-86 contacts (2S)-2-hydroxy-3-oxobutyl phosphate; it reads AT. His-88 serves as the catalytic Proton donor. Phe-113 is a binding site for 5-amino-6-(D-ribitylamino)uracil. Residue Arg-127 coordinates (2S)-2-hydroxy-3-oxobutyl phosphate.

It belongs to the DMRL synthase family.

The enzyme catalyses (2S)-2-hydroxy-3-oxobutyl phosphate + 5-amino-6-(D-ribitylamino)uracil = 6,7-dimethyl-8-(1-D-ribityl)lumazine + phosphate + 2 H2O + H(+). It participates in cofactor biosynthesis; riboflavin biosynthesis; riboflavin from 2-hydroxy-3-oxobutyl phosphate and 5-amino-6-(D-ribitylamino)uracil: step 1/2. Its function is as follows. Catalyzes the formation of 6,7-dimethyl-8-ribityllumazine by condensation of 5-amino-6-(D-ribitylamino)uracil with 3,4-dihydroxy-2-butanone 4-phosphate. This is the penultimate step in the biosynthesis of riboflavin. The sequence is that of 6,7-dimethyl-8-ribityllumazine synthase from Clostridium perfringens (strain ATCC 13124 / DSM 756 / JCM 1290 / NCIMB 6125 / NCTC 8237 / Type A).